An 81-amino-acid polypeptide reads, in one-letter code: MKTLLLTLVVVTIVCLDLGYTLKCNKLVPLFYKTCPAGKNLCYKMYMVATPKVPVKRGCIDVCPKSSLLVKYVCCNTDRCN.

The N-terminal stretch at 1–21 (MKTLLLTLVVVTIVCLDLGYT) is a signal peptide. 4 disulfide bridges follow: Cys-24–Cys-42, Cys-35–Cys-59, Cys-63–Cys-74, and Cys-75–Cys-80.

It belongs to the three-finger toxin family. Short-chain subfamily. Type IA cytotoxin sub-subfamily. Monomer in solution; homodimer and oligomer in the presence of negatively charged lipids forming a pore with a size ranging between 20 and 30 Angstroms. As to expression, expressed by the venom gland.

The protein localises to the secreted. Its subcellular location is the target cell membrane. In terms of biological role, shows cytolytic activity on many different cells by forming pores in lipid membranes. Exhibits concentration-dependent growth inhibitory effects in the lung cell lines A549 (IC(50)= 0.88) and NL20 (IC(50)= 1.91), in the prostate cell lines PC-3 (IC(50)= 3.13 ug/ml) and RWPE-1 (IC(50)=0.35 ug/ml), and in the breast cell lines MCF-7 (IC(50)= 9.10 ug/ml) and 184B5 (IC(50)=6.21 ug/ml), with high selectivity for the lung cancer cell line A549 (selectivity index=2.17). Induces primarily necrosis in the A549 lung cancer cell line, and mainly caspase-independent late apoptosis in the breast cancer cells line MCF-7 and in the prostate cancer cell line PC-3. In Naja sumatrana (Equatorial spitting cobra), this protein is Cytotoxin 1.